The following is a 61-amino-acid chain: Defensin-like peptide TXKs2 (61 aa).

An N-terminal signal peptide occupies residues methionine 1–serine 19. Residues asparagine 20–valine 22 constitute a propeptide that is removed on maturation. Intrachain disulfides connect cysteine 26-cysteine 47, cysteine 33-cysteine 56, and cysteine 37-cysteine 58.

It belongs to the invertebrate defensin family. As to expression, expressed by the venom gland.

The protein localises to the secreted. Its function is as follows. Antibacterial protein. The chain is Defensin-like peptide TXKs2 from Olivierus martensii (Manchurian scorpion).